The sequence spans 194 residues: Potassium-transporting ATPase KdpC subunit (194 aa).

The helical transmembrane segment at 12-34 (LFLLLLTGGVYPLLTTALGQWWF) threads the bilayer.

This sequence belongs to the KdpC family. In terms of assembly, the system is composed of three essential subunits: KdpA, KdpB and KdpC.

The protein resides in the cell inner membrane. In terms of biological role, part of the high-affinity ATP-driven potassium transport (or Kdp) system, which catalyzes the hydrolysis of ATP coupled with the electrogenic transport of potassium into the cytoplasm. This subunit acts as a catalytic chaperone that increases the ATP-binding affinity of the ATP-hydrolyzing subunit KdpB by the formation of a transient KdpB/KdpC/ATP ternary complex. This Salmonella agona (strain SL483) protein is Potassium-transporting ATPase KdpC subunit.